We begin with the raw amino-acid sequence, 624 residues long: MKGQETRGFQSEVKQLLHLMIHSLYSNKEIFLRELISNASDAADKLRFRALSNPDLYEGDGELRVRVSFDKDKRTLTISDNGVGMTRDEVIDHLGTIAKSGTKSFLESLGSDQAKDSQLIGQFGVGFYSAFIVADKVTVRTRAAGEKPENGVFWESAGEGEYTVADITKEDRGTEITLHLREGEDEFLDDWRVRSIISKYSDHIALPVEIEKREEKDGETVISWEKINKAQALWTRNKSEITDEEYKEFYKHIAHDFNEPLTWSHNRVEGKQEYTSLLYIPSQAPWDMWNRDHKHGLKLYVQRVFIMDDAEQFMPNYLRFVRGLIDSSDLPLNVSREILQDSTVTRNLRNALTKRVLQMLEKLAKDDAEKYQTFWQQFGLVLKEGPAEDFANQEAIAKLLRFASTHTDSSAQTVSLEDYVSRMKEGQEKIYYITADSYAAAKSSPHLELLRKKGIEVLLLSDRIDEWMMNYLTEFDGKPFQSVSKVDESLEKLADEVDESAKEAEKALTPFIDRVKALLGERVKDVRLTHRLTDTPAIVSTDADEMSTQMAKLFAAAGQKVPEVKYIFELNPDHVLVKRAADTEDEAKFSEWVELLLDQALLAERGTLEDPNLFIRRMNQLLVS.

The interval 1 to 336 (MKGQETRGFQ…SSDLPLNVSR (336 aa)) is a; substrate-binding. The tract at residues 337 to 552 (EILQDSTVTR…ADEMSTQMAK (216 aa)) is b. The segment at 553-624 (LFAAAGQKVP…IRRMNQLLVS (72 aa)) is c.

Belongs to the heat shock protein 90 family. Homodimer.

The protein resides in the cytoplasm. In terms of biological role, molecular chaperone. Has ATPase activity. This chain is Chaperone protein HtpG, found in Escherichia coli O1:K1 / APEC.